A 341-amino-acid chain; its full sequence is AB hydrolase superfamily protein C1039.03 (341 aa).

This sequence belongs to the AB hydrolase superfamily.

It localises to the cytoplasm. The protein localises to the nucleus. The sequence is that of AB hydrolase superfamily protein C1039.03 from Schizosaccharomyces pombe (strain 972 / ATCC 24843) (Fission yeast).